Consider the following 70-residue polypeptide: Fumarase D (70 aa).

It belongs to the FumD family.

It carries out the reaction (S)-malate = fumarate + H2O. In terms of biological role, in vitro catalyzes the addition of water to fumarate, forming malate. Cannot catalyze the reverse reaction. Cannot use the cis-isomer maleate as substrate. The chain is Fumarase D from Salmonella typhi.